The primary structure comprises 474 residues: Glutathione synthetase (474 aa).

Ala2 is modified (N-acetylalanine). Arg125 contributes to the substrate binding site. ATP is bound at residue Glu144. Residues Glu144 and Asn146 each coordinate Mg(2+). Substrate-binding positions include 148–151 (ISAS), 214–216 (ERN), Gln220, and 267–270 (RDGY). ATP contacts are provided by residues Lys305, 364–373 (KPQREGGGNN), Tyr375, and 398–401 (MEKI). Glu368 is a binding site for Mg(2+). Ser415 carries the phosphoserine modification. An ATP-binding site is contributed by Glu425. Position 450 (Arg450) interacts with substrate. The ATP site is built by Lys452 and Asp458. Residue 461 to 462 (VA) participates in substrate binding.

The protein belongs to the eukaryotic GSH synthase family. In terms of assembly, homodimer. The cofactor is Mg(2+).

It catalyses the reaction gamma-L-glutamyl-L-cysteine + glycine + ATP = glutathione + ADP + phosphate + H(+). The catalysed reaction is gamma-L-glutamyl-(2S)-2-aminobutanoate + glycine + ATP = ophthalmate + ADP + phosphate + H(+). It functions in the pathway sulfur metabolism; glutathione biosynthesis; glutathione from L-cysteine and L-glutamate: step 2/2. Functionally, catalyzes the production of glutathione from gamma-glutamylcysteine and glycine in an ATP-dependent manner. Glutathione (gamma-glutamylcysteinylglycine, GSH) is the most abundant intracellular thiol in living aerobic cells and is required for numerous processes including the protection of cells against oxidative damage, amino acid transport, the detoxification of foreign compounds, the maintenance of protein sulfhydryl groups in a reduced state and acts as a cofactor for a number of enzymes. Participates in ophthalmate biosynthesis in hepatocytes. This is Glutathione synthetase from Mus musculus (Mouse).